The following is a 255-amino-acid chain: MRILKKKMKLKGKVKKYLIDKLNDNEKLHFSLIDPFKINSSDELKYITKNLYNAGTDAFLIGGTLGVSKDKLDFVISLLDDYEIPKIIFPSNINLLSEKADALLFMSLLNSDDIYYIIGAQIVAAPIIKMLQMEVIPTAYVIVGHGGTAAHIGKARVIPYDNFELATAYTLAAEYLGMSFVYLEAGSGAPEPIRPEMISFIKNASSIPLIVGGGIRSVEVALKLVEAGADIIVTGNIIESDVNKAIKIIRGIKNK.

Residues Asp34 and Thr64 each contribute to the Mg(2+) site. Sn-glycerol 1-phosphate-binding positions include 182 to 188 (YLEAGSG), 213 to 214 (GG), and 235 to 236 (GN).

It belongs to the GGGP/HepGP synthase family. Group II subfamily. Mg(2+) serves as cofactor.

It is found in the cytoplasm. It carries out the reaction sn-glycerol 1-phosphate + (2E,6E,10E)-geranylgeranyl diphosphate = sn-3-O-(geranylgeranyl)glycerol 1-phosphate + diphosphate. It functions in the pathway membrane lipid metabolism; glycerophospholipid metabolism. Prenyltransferase that catalyzes the transfer of the geranylgeranyl moiety of geranylgeranyl diphosphate (GGPP) to the C3 hydroxyl of sn-glycerol-1-phosphate (G1P). This reaction is the first ether-bond-formation step in the biosynthesis of archaeal membrane lipids. The sequence is that of Geranylgeranylglyceryl phosphate synthase from Saccharolobus solfataricus (strain ATCC 35092 / DSM 1617 / JCM 11322 / P2) (Sulfolobus solfataricus).